Here is a 185-residue protein sequence, read N- to C-terminus: Ribosome-recycling factor (185 aa).

This sequence belongs to the RRF family.

It is found in the cytoplasm. Its function is as follows. Responsible for the release of ribosomes from messenger RNA at the termination of protein biosynthesis. May increase the efficiency of translation by recycling ribosomes from one round of translation to another. This Roseiflexus castenholzii (strain DSM 13941 / HLO8) protein is Ribosome-recycling factor.